The chain runs to 450 residues: Bifunctional protein GlmU (450 aa).

The segment at 1 to 228 (MSTALVILAA…EAQTLGVNSR (228 aa)) is pyrophosphorylase. Residues 8 to 11 (LAAG), lysine 22, glutamine 75, 80 to 81 (GT), 103 to 105 (YGD), glycine 140, glutamate 154, asparagine 169, and asparagine 226 contribute to the UDP-N-acetyl-alpha-D-glucosamine site. Position 105 (aspartate 105) interacts with Mg(2+). Residue asparagine 226 participates in Mg(2+) binding. Residues 229–249 (ADLAAADAIFQTRARAELLDL) are linker. The N-acetyltransferase stretch occupies residues 250–450 (GVTLMAPETV…AKKASKQKET (201 aa)). UDP-N-acetyl-alpha-D-glucosamine contacts are provided by arginine 315 and lysine 333. Histidine 345 (proton acceptor) is an active-site residue. UDP-N-acetyl-alpha-D-glucosamine contacts are provided by tyrosine 348 and asparagine 359. Acetyl-CoA-binding positions include alanine 362, 368–369 (NY), serine 387, threonine 405, and arginine 422.

In the N-terminal section; belongs to the N-acetylglucosamine-1-phosphate uridyltransferase family. The protein in the C-terminal section; belongs to the transferase hexapeptide repeat family. In terms of assembly, homotrimer. It depends on Mg(2+) as a cofactor.

It localises to the cytoplasm. It carries out the reaction alpha-D-glucosamine 1-phosphate + acetyl-CoA = N-acetyl-alpha-D-glucosamine 1-phosphate + CoA + H(+). The catalysed reaction is N-acetyl-alpha-D-glucosamine 1-phosphate + UTP + H(+) = UDP-N-acetyl-alpha-D-glucosamine + diphosphate. The protein operates within nucleotide-sugar biosynthesis; UDP-N-acetyl-alpha-D-glucosamine biosynthesis; N-acetyl-alpha-D-glucosamine 1-phosphate from alpha-D-glucosamine 6-phosphate (route II): step 2/2. It participates in nucleotide-sugar biosynthesis; UDP-N-acetyl-alpha-D-glucosamine biosynthesis; UDP-N-acetyl-alpha-D-glucosamine from N-acetyl-alpha-D-glucosamine 1-phosphate: step 1/1. It functions in the pathway bacterial outer membrane biogenesis; LPS lipid A biosynthesis. In terms of biological role, catalyzes the last two sequential reactions in the de novo biosynthetic pathway for UDP-N-acetylglucosamine (UDP-GlcNAc). The C-terminal domain catalyzes the transfer of acetyl group from acetyl coenzyme A to glucosamine-1-phosphate (GlcN-1-P) to produce N-acetylglucosamine-1-phosphate (GlcNAc-1-P), which is converted into UDP-GlcNAc by the transfer of uridine 5-monophosphate (from uridine 5-triphosphate), a reaction catalyzed by the N-terminal domain. This Ruegeria pomeroyi (strain ATCC 700808 / DSM 15171 / DSS-3) (Silicibacter pomeroyi) protein is Bifunctional protein GlmU.